Here is a 242-residue protein sequence, read N- to C-terminus: Trypsin-1 (242 aa).

The signal sequence occupies residues 1 to 15 (MISLVFVLLIGAAFA). The propeptide at 16-20 (TEDDK) is activation peptide. Residues 21–240 (IVGGYECKAY…FNDWLTSTMA (220 aa)) enclose the Peptidase S1 domain. Intrachain disulfides connect Cys-27-Cys-156, Cys-45-Cys-61, Cys-129-Cys-229, Cys-136-Cys-202, Cys-167-Cys-181, and Cys-192-Cys-216. Residue His-60 is the Charge relay system of the active site. Glu-72, Asn-74, Val-77, and Glu-82 together coordinate Ca(2+). Asp-104 acts as the Charge relay system in catalysis. The Charge relay system role is filled by Ser-196.

This sequence belongs to the peptidase S1 family. The cofactor is Ca(2+).

It is found in the secreted. It localises to the extracellular space. It carries out the reaction Preferential cleavage: Arg-|-Xaa, Lys-|-Xaa.. The polypeptide is Trypsin-1 (Salmo salar (Atlantic salmon)).